The following is a 506-amino-acid chain: WD repeat-containing protein 55 homolog (506 aa).

Over residues 1 to 11 (MHRHDCFKTPA) the composition is skewed to basic and acidic residues. Disordered stretches follow at residues 1 to 20 (MHRHDCFKTPADEDELDDID), 33 to 87 (QEVL…SDDS), and 100 to 132 (AKRRKEQNAMDGAEPSGSGPSGSGDYSHLDEDD). A compositionally biased stretch (acidic residues) spans 33-48 (QEVLNESESDDDEYDL). Residues 61-74 (GNISSNESISSDGS) are compositionally biased toward low complexity. A compositionally biased stretch (acidic residues) spans 78–87 (NAEDTDSDDS). WD repeat units follow at residues 156 to 195 (RLEDFITDICFHPERDIIALATIIGDVHLYEYGNEENKLL), 200 to 239 (VHAKACRDVEFTEDGRSLITCSKDKCVMVTDMETEKLKKL), 243 to 281 (AHDDAINKLHVLDERLFATGDDAGTVKLWDFRTKDAIFE), 284 to 323 (EVEDQITQMLTNEQNKLLLATSADGYLTTFNIGARKLYVQ), 326 to 365 (PYEEELNCMGIYRGSSKLVVGTSKGRLYTYNWGYFGYHCD), and 410 to 449 (QHNMPIESLDINSSGELLASSSHNNDVRFWNVKYFEDFGD). Residues 480 to 506 (DMTKEQDDDDNDDGGNNTTAAGSNNVT) are disordered. The segment covering 493–506 (GGNNTTAAGSNNVT) has biased composition (low complexity).

This sequence belongs to the WD repeat WDR55 family.

In Drosophila mojavensis (Fruit fly), this protein is WD repeat-containing protein 55 homolog.